The primary structure comprises 659 residues: Cysteine-rich receptor-like protein kinase 18 (659 aa).

The first 27 residues, 1-27 (MATKSCELVLCFFVFFVISFSAISVSA), serve as a signal peptide directing secretion. Gnk2-homologous domains lie at 28-131 (QTCD…NRPF) and 137-250 (MDPL…VYPF). Over 28–287 (QTCDNTTGTF…KNDSRISGGK (260 aa)) the chain is Extracellular. 9 N-linked (GlcNAc...) asparagine glycosylation sites follow: asparagine 32, asparagine 57, asparagine 152, asparagine 162, asparagine 179, asparagine 180, asparagine 197, asparagine 275, and asparagine 279. A helical membrane pass occupies residues 288 to 308 (IAAIVVVTVVTIILVVLGFVI). Residues 309–659 (SNRRKQKQEM…EATITDVNPR (351 aa)) lie on the Cytoplasmic side of the membrane. The Protein kinase domain maps to 339-611 (FSERNKLGKG…PTMSTIHQML (273 aa)). Residues 345–353 (LGKGGFGEV) and lysine 367 contribute to the ATP site. Tyrosine 412 bears the Phosphotyrosine mark. Residue aspartate 464 is the Proton acceptor of the active site. Residue serine 468 is modified to Phosphoserine. Threonine 504 carries the post-translational modification Phosphothreonine. The residue at position 512 (tyrosine 512) is a Phosphotyrosine.

The protein belongs to the protein kinase superfamily. Ser/Thr protein kinase family. CRK subfamily.

It is found in the membrane. The enzyme catalyses L-seryl-[protein] + ATP = O-phospho-L-seryl-[protein] + ADP + H(+). It catalyses the reaction L-threonyl-[protein] + ATP = O-phospho-L-threonyl-[protein] + ADP + H(+). This chain is Cysteine-rich receptor-like protein kinase 18 (CRK18), found in Arabidopsis thaliana (Mouse-ear cress).